The following is a 79-amino-acid chain: Toxin ICK-20 (79 aa).

The first 20 residues, 1–20 (MMKYFLVLCLVVLGVAAVQA), serve as a signal peptide directing secretion. 4 cysteine pairs are disulfide-bonded: Cys43–Cys57, Cys50–Cys61, Cys56–Cys78, and Cys68–Cys74. Residue Asn71 is glycosylated (N-linked (GlcNAc...) asparagine).

This sequence belongs to the neurotoxin 13 (insecticidal toxin ABC) family. ICK-21 subfamily. As to expression, expressed by the venom gland.

It localises to the secreted. In terms of biological role, ion channel inhibitor. The sequence is that of Toxin ICK-20 from Trittame loki (Brush-footed trapdoor spider).